A 132-amino-acid chain; its full sequence is Small ribosomal subunit protein uS8 (132 aa).

It belongs to the universal ribosomal protein uS8 family. In terms of assembly, part of the 30S ribosomal subunit. Contacts proteins S5 and S12.

Its function is as follows. One of the primary rRNA binding proteins, it binds directly to 16S rRNA central domain where it helps coordinate assembly of the platform of the 30S subunit. In Leifsonia xyli subsp. xyli (strain CTCB07), this protein is Small ribosomal subunit protein uS8.